A 505-amino-acid chain; its full sequence is Lysine--tRNA ligase, heat inducible (505 aa).

Lys-114 and Lys-156 each carry N6-acetyllysine. 2 residues coordinate Mg(2+): Glu-415 and Glu-422.

It belongs to the class-II aminoacyl-tRNA synthetase family. In terms of assembly, homodimer. Mg(2+) is required as a cofactor.

The protein localises to the cytoplasm. The enzyme catalyses tRNA(Lys) + L-lysine + ATP = L-lysyl-tRNA(Lys) + AMP + diphosphate. This Escherichia coli O6:H1 (strain CFT073 / ATCC 700928 / UPEC) protein is Lysine--tRNA ligase, heat inducible (lysU).